Here is a 341-residue protein sequence, read N- to C-terminus: Glycerol-3-phosphate dehydrogenase [NAD(P)+] (341 aa).

Ser-14, Phe-15, Arg-35, and Lys-108 together coordinate NADPH. Lys-108 and Gly-136 together coordinate sn-glycerol 3-phosphate. NADPH is bound at residue Ala-140. The sn-glycerol 3-phosphate site is built by Lys-191, Asp-244, Ser-254, Arg-255, and Asn-256. Lys-191 serves as the catalytic Proton acceptor. Arg-255 contacts NADPH. NADPH-binding residues include Val-279 and Glu-281.

It belongs to the NAD-dependent glycerol-3-phosphate dehydrogenase family.

It is found in the cytoplasm. The catalysed reaction is sn-glycerol 3-phosphate + NAD(+) = dihydroxyacetone phosphate + NADH + H(+). It catalyses the reaction sn-glycerol 3-phosphate + NADP(+) = dihydroxyacetone phosphate + NADPH + H(+). It participates in membrane lipid metabolism; glycerophospholipid metabolism. In terms of biological role, catalyzes the reduction of the glycolytic intermediate dihydroxyacetone phosphate (DHAP) to sn-glycerol 3-phosphate (G3P), the key precursor for phospholipid synthesis. The chain is Glycerol-3-phosphate dehydrogenase [NAD(P)+] from Pseudomonas putida (strain ATCC 700007 / DSM 6899 / JCM 31910 / BCRC 17059 / LMG 24140 / F1).